Reading from the N-terminus, the 156-residue chain is Cyanate hydratase (156 aa).

Active-site residues include arginine 96, glutamate 99, and serine 122.

This sequence belongs to the cyanase family.

It carries out the reaction cyanate + hydrogencarbonate + 3 H(+) = NH4(+) + 2 CO2. Its function is as follows. Catalyzes the reaction of cyanate with bicarbonate to produce ammonia and carbon dioxide. This is Cyanate hydratase from Escherichia coli O7:K1 (strain IAI39 / ExPEC).